We begin with the raw amino-acid sequence, 81 residues long: Cytotoxin 1d/1e (81 aa).

An N-terminal signal peptide occupies residues 1 to 21 (MKTLLLTLVVVTIVCLDLGYT). Disulfide bonds link Cys-24/Cys-42, Cys-35/Cys-59, Cys-63/Cys-74, and Cys-75/Cys-80.

Belongs to the three-finger toxin family. Short-chain subfamily. Type IA cytotoxin sub-subfamily. In terms of assembly, monomer in solution; Homodimer and oligomer in the presence of negatively charged lipids forming a pore with a size ranging between 20 and 30 Angstroms. In terms of tissue distribution, expressed by the venom gland.

It is found in the secreted. The protein localises to the target cell membrane. Functionally, shows cytolytic activity on many different cells by forming pore in lipid membranes. In vivo, increases heart rate or kills the animal by cardiac arrest. In addition, it binds to heparin with high affinity, interacts with Kv channel-interacting protein 1 (KCNIP1) in a calcium-independent manner, and binds to integrin alpha-V/beta-3 (ITGAV/ITGB3) with moderate affinity. The protein is Cytotoxin 1d/1e of Naja atra (Chinese cobra).